A 444-amino-acid polypeptide reads, in one-letter code: Probable D-serine dehydratase (444 aa).

K118 bears the N6-(pyridoxal phosphate)lysine mark.

The protein belongs to the serine/threonine dehydratase family. DsdA subfamily. It depends on pyridoxal 5'-phosphate as a cofactor.

It catalyses the reaction D-serine = pyruvate + NH4(+). The protein is Probable D-serine dehydratase of Acinetobacter baumannii (strain ATCC 17978 / DSM 105126 / CIP 53.77 / LMG 1025 / NCDC KC755 / 5377).